The chain runs to 77 residues: Acyl carrier protein (77 aa).

Residues 2-77 (SDVADRVKKI…DAVKFISEAS (76 aa)) enclose the Carrier domain. Residue Ser-37 is modified to O-(pantetheine 4'-phosphoryl)serine.

This sequence belongs to the acyl carrier protein (ACP) family. In terms of processing, 4'-phosphopantetheine is transferred from CoA to a specific serine of apo-ACP by AcpS. This modification is essential for activity because fatty acids are bound in thioester linkage to the sulfhydryl of the prosthetic group.

It is found in the cytoplasm. It functions in the pathway lipid metabolism; fatty acid biosynthesis. Functionally, carrier of the growing fatty acid chain in fatty acid biosynthesis. This Ruegeria sp. (strain TM1040) (Silicibacter sp.) protein is Acyl carrier protein.